The chain runs to 248 residues: 4-hydroxy-tetrahydrodipicolinate reductase (248 aa).

NAD(+) contacts are provided by residues 8-13 (GAKGRV), aspartate 34, 76-78 (GTT), and 103-106 (APNF). The Proton donor/acceptor role is filled by histidine 133. Histidine 134 provides a ligand contact to (S)-2,3,4,5-tetrahydrodipicolinate. The active-site Proton donor is lysine 137. 143 to 144 (GT) serves as a coordination point for (S)-2,3,4,5-tetrahydrodipicolinate.

The protein belongs to the DapB family.

Its subcellular location is the cytoplasm. The enzyme catalyses (S)-2,3,4,5-tetrahydrodipicolinate + NAD(+) + H2O = (2S,4S)-4-hydroxy-2,3,4,5-tetrahydrodipicolinate + NADH + H(+). It carries out the reaction (S)-2,3,4,5-tetrahydrodipicolinate + NADP(+) + H2O = (2S,4S)-4-hydroxy-2,3,4,5-tetrahydrodipicolinate + NADPH + H(+). The protein operates within amino-acid biosynthesis; L-lysine biosynthesis via DAP pathway; (S)-tetrahydrodipicolinate from L-aspartate: step 4/4. In terms of biological role, catalyzes the conversion of 4-hydroxy-tetrahydrodipicolinate (HTPA) to tetrahydrodipicolinate. In Corynebacterium urealyticum (strain ATCC 43042 / DSM 7109), this protein is 4-hydroxy-tetrahydrodipicolinate reductase.